The sequence spans 28 residues: Taicatoxin, alpha-neurotoxin-like component (28 aa).

A disulfide bridge connects residues Cys3 and Cys21.

Belongs to the three-finger toxin family. Long-chain subfamily. Type II alpha-neurotoxin sub-subfamily. Heterotrimer composed of this alpha-neurotoxin-like peptide of 8 kDa, a neurotoxic phospholipase of 16 kDa (AC Q7LZG2) and a serine protease inhibitor of 7 kDa (AC B7S4N9) at an approximate stoichiometry of 1:1:4; non-covalently linked. As to expression, expressed by the venom gland.

Its subcellular location is the secreted. Functionally, the heterotrimer blocks the voltage-dependent L-type calcium channels (Cav1/CACNA1) from the heart, and the small conductance calcium-activated potassium channels (KCa2/KCNN) in the chromaffin cells and in the brain. Is very toxic to mice. This chain is Taicatoxin, alpha-neurotoxin-like component, found in Oxyuranus scutellatus scutellatus (Australian taipan).